The following is a 108-amino-acid chain: Large ribosomal subunit protein uL24 (108 aa).

It belongs to the universal ribosomal protein uL24 family. In terms of assembly, part of the 50S ribosomal subunit.

In terms of biological role, one of two assembly initiator proteins, it binds directly to the 5'-end of the 23S rRNA, where it nucleates assembly of the 50S subunit. Functionally, one of the proteins that surrounds the polypeptide exit tunnel on the outside of the subunit. The polypeptide is Large ribosomal subunit protein uL24 (Salinispora tropica (strain ATCC BAA-916 / DSM 44818 / JCM 13857 / NBRC 105044 / CNB-440)).